Reading from the N-terminus, the 333-residue chain is CRISPR-associated endonuclease Cas1 (333 aa).

Glutamate 162, histidine 226, and glutamate 241 together coordinate Mn(2+).

It belongs to the CRISPR-associated endonuclease Cas1 family. Homodimer, forms a heterotetramer with a Cas2 homodimer. Mg(2+) serves as cofactor. Mn(2+) is required as a cofactor.

CRISPR (clustered regularly interspaced short palindromic repeat), is an adaptive immune system that provides protection against mobile genetic elements (viruses, transposable elements and conjugative plasmids). CRISPR clusters contain spacers, sequences complementary to antecedent mobile elements, and target invading nucleic acids. CRISPR clusters are transcribed and processed into CRISPR RNA (crRNA). Acts as a dsDNA endonuclease. Involved in the integration of spacer DNA into the CRISPR cassette. This chain is CRISPR-associated endonuclease Cas1, found in Nanoarchaeum equitans (strain Kin4-M).